The following is a 241-amino-acid chain: Beta-nerve growth factor (241 aa).

The signal sequence occupies residues M1–A18. The propeptide occupies E19–R121. Residues N69 and N114 are each glycosylated (N-linked (GlcNAc...) asparagine). 3 cysteine pairs are disulfide-bonded: C136–C201, C179–C229, and C189–C231. Positions 173 and 209 each coordinate a 1-acyl-sn-glycero-3-phospho-(1D-myo-inositol). An a 1-acyl-sn-glycero-3-phospho-L-serine-binding site is contributed by K209.

This sequence belongs to the NGF-beta family. Homodimer. The homodimer interacts with a single NTRK1 chain. The homodimer interacts with a single NGFR chain. The NGF dimer interacts with a single SORCS2 chain (via extracellular domain). The NGF precursor (proNGF) binds to a receptor complex formed by SORT1 and NGFR, which leads to NGF endocytosis. Both mature NGF and the immature NGF precursor (proNGF) interact with SORCS2 and with the heterodimer formed by SORCS2 and NGFR (via extracellular domains). The NGF precursor (proNGF) has much higher affinity for SORCS2 than mature NGF. The NGF precursor (proNGF) has much higher affinity for SORT1 than mature NGF. Interacts with ADAM10 in a divalent cation-dependent manner. Interaction with SORCS3.

It localises to the secreted. Its subcellular location is the endosome lumen. Nerve growth factor is important for the development and maintenance of the sympathetic and sensory nervous systems. Extracellular ligand for the NTRK1 and NGFR receptors, activates cellular signaling cascades to regulate neuronal proliferation, differentiation and survival. The immature NGF precursor (proNGF) functions as a ligand for the heterodimeric receptor formed by SORCS2 and NGFR, and activates cellular signaling cascades that lead to inactivation of RAC1 and/or RAC2, reorganization of the actin cytoskeleton and neuronal growth cone collapse. In contrast to mature NGF, the precursor form (proNGF) promotes neuronal apoptosis (in vitro). Inhibits metalloproteinase-dependent proteolysis of platelet glycoprotein VI. Binds lysophosphatidylinositol and lysophosphatidylserine between the two chains of the homodimer. The lipid-bound form promotes histamine relase from mast cells, contrary to the lipid-free form. In Homo sapiens (Human), this protein is Beta-nerve growth factor (NGF).